We begin with the raw amino-acid sequence, 100 residues long: Urease subunit gamma (100 aa).

This sequence belongs to the urease gamma subunit family. As to quaternary structure, heterotrimer of UreA (gamma), UreB (beta) and UreC (alpha) subunits. Three heterotrimers associate to form the active enzyme.

Its subcellular location is the cytoplasm. The catalysed reaction is urea + 2 H2O + H(+) = hydrogencarbonate + 2 NH4(+). The protein operates within nitrogen metabolism; urea degradation; CO(2) and NH(3) from urea (urease route): step 1/1. This chain is Urease subunit gamma, found in Rhodococcus opacus (strain B4).